The sequence spans 149 residues: MKVIFLKDVKGKGKKGEIKDVADGYANNFLFKQGLAIEATPANIKALEAQKQKEQRQAAEELANAKKLKEELEKLTVEIPAKAGEGGRLFGSITSKQIAEALQAQHGLKLDKRKIELADAIRSLGYTNVPVKLHPEVTATLKVHVKEQK.

Belongs to the bacterial ribosomal protein bL9 family.

Functionally, binds to the 23S rRNA. The polypeptide is Large ribosomal subunit protein bL9 (Geobacillus kaustophilus (strain HTA426)).